The following is a 101-amino-acid chain: Small ribosomal subunit protein uS14 (101 aa).

Belongs to the universal ribosomal protein uS14 family. As to quaternary structure, part of the 30S ribosomal subunit. Contacts proteins S3 and S10.

Binds 16S rRNA, required for the assembly of 30S particles and may also be responsible for determining the conformation of the 16S rRNA at the A site. The protein is Small ribosomal subunit protein uS14 of Salmonella schwarzengrund (strain CVM19633).